The sequence spans 1114 residues: TBC1 domain family member 8B (1114 aa).

2 GRAM domains span residues Leu-145–Ser-212 and Glu-285–Asp-353. Over residues Thr-399–Ser-411 the composition is skewed to polar residues. The tract at residues Thr-399 to Thr-420 is disordered. Positions Gly-486–Gly-673 constitute a Rab-GAP TBC domain. Residues Asn-857 to Gly-892 enclose the EF-hand domain. 2 disordered regions span residues Ser-938–Lys-957 and Leu-1032–Pro-1061. The span at Pro-940 to Lys-957 shows a compositional bias: basic and acidic residues.

As to quaternary structure, interacts (via domain Rab-GAP TBC) with RAB11B (in GTP-bound form).

It localises to the cytoplasm. Its subcellular location is the cytosol. Its function is as follows. Involved in vesicular recycling, probably as a RAB11B GTPase-activating protein. This is TBC1 domain family member 8B (Tbc1d8b) from Mus musculus (Mouse).